Consider the following 154-residue polypeptide: Lymphocyte antigen 6K (154 aa).

An N-terminal signal peptide occupies residues 1–20 (MAFLVALLVVLGLQLVQSNA). One can recognise a UPAR/Ly6 domain in the interval 21-117 (LTCHVCEAQN…NGEGPPTDQL (97 aa)). G123 carries the GPI-anchor amidated glycine lipid modification. The propeptide at 124 to 154 (KASGRRHRYIELLLTGFMVLTANGLSALCLL) is removed in mature form.

As to quaternary structure, interacts with ADAM3 and TEX101. As to expression, strongly expressed in testes and weakly expressed in the epididymis, ovary, and uterus. Expressed in testicular germ cells (TGCs). Expressed in the testicular seminiferous tubules, in spermatocytes, spermatids, and testicular spermatozoa.

The protein localises to the secreted. Its subcellular location is the cytoplasm. It is found in the cell membrane. The protein resides in the cytoplasmic vesicle. It localises to the secretory vesicle. The protein localises to the acrosome. Its subcellular location is the membrane raft. Functionally, required for sperm migration into the oviduct and male fertility by controlling binding of sperm to zona pellucida. May play a role in cell growth. This is Lymphocyte antigen 6K from Mus musculus (Mouse).